Reading from the N-terminus, the 584-residue chain is UvrABC system protein C (584 aa).

One can recognise a GIY-YIG domain in the interval 14-91 (HKPGCYLWKD…IKTHLPKYNI (78 aa)). The UVR domain maps to 192–227 (DHILMILQTKEQHAVTKLDFENAQKYAEQQKALTSI).

The protein belongs to the UvrC family. As to quaternary structure, interacts with UvrB in an incision complex.

It is found in the cytoplasm. Its function is as follows. The UvrABC repair system catalyzes the recognition and processing of DNA lesions. UvrC both incises the 5' and 3' sides of the lesion. The N-terminal half is responsible for the 3' incision and the C-terminal half is responsible for the 5' incision. The chain is UvrABC system protein C from Ureaplasma parvum serovar 3 (strain ATCC 27815 / 27 / NCTC 11736).